Here is a 247-residue protein sequence, read N- to C-terminus: 3-deoxy-manno-octulosonate cytidylyltransferase (247 aa).

Belongs to the KdsB family.

The protein localises to the cytoplasm. The catalysed reaction is 3-deoxy-alpha-D-manno-oct-2-ulosonate + CTP = CMP-3-deoxy-beta-D-manno-octulosonate + diphosphate. It participates in nucleotide-sugar biosynthesis; CMP-3-deoxy-D-manno-octulosonate biosynthesis; CMP-3-deoxy-D-manno-octulosonate from 3-deoxy-D-manno-octulosonate and CTP: step 1/1. Its pathway is bacterial outer membrane biogenesis; lipopolysaccharide biosynthesis. In terms of biological role, activates KDO (a required 8-carbon sugar) for incorporation into bacterial lipopolysaccharide in Gram-negative bacteria. The polypeptide is 3-deoxy-manno-octulosonate cytidylyltransferase (Afipia carboxidovorans (strain ATCC 49405 / DSM 1227 / KCTC 32145 / OM5) (Oligotropha carboxidovorans)).